Reading from the N-terminus, the 542-residue chain is GATA-type transcription factor sreA (542 aa).

Polar residues predominate over residues 1–10 (MLTLRSSSDT). The tract at residues 1 to 172 (MLTLRSSSDT…SAQNASGCGS (172 aa)) is disordered. Positions 44 to 63 (ADLRPDSFDASRSPDGDKAS) are enriched in basic and acidic residues. Composition is skewed to low complexity over residues 75–117 (SSDQ…PKAS) and 148–168 (SSTS…QNAS). The interval 178 to 196 (CPGGGSCNGTGGAVGCDGC) is cystein-rich region (CRR). The span at 210-223 (APSARQARASPSAQ) shows a compositional bias: low complexity. Positions 210 to 248 (APSARQARASPSAQTSEEQAQSGLDALDSASQDASGMPK) are disordered. The GATA-type zinc finger occupies 250-274 (CQNCGTTLTPLWRRDDQGNTICNAC). Over residues 289 to 300 (MKKTVIKRRKRV) the composition is skewed to basic residues. 2 disordered regions span residues 289–408 (MKKT…PATR) and 461–525 (SNAP…REAE). Polar residues-rich tracts occupy residues 311-320 (AGSSDNSSVS) and 369-387 (KPTQ…NHSP). Over residues 396 to 407 (ESTSAESAPPAT) the composition is skewed to low complexity. The span at 464–483 (PARSQTQTQPQPGTRSYSPN) shows a compositional bias: polar residues. The stretch at 510–542 (DKVKAARRAQLQREAENMREALRAKERELASLK) forms a coiled coil.

It localises to the nucleus. Functionally, GATA-type transcription repressor that regulates iron acquisition genes through specific binding the GATA sequence elements of target promoters. SreA targets include genes encoding a number of key iron-regulated factors such as the siderophore biosynthesis genes. Is dispensable for growth on keratin substrates. SreA represses the expression of hapX and the siderophore system during iron sufficient conditions by an iron-sensing mechanism, while hapX represses sreA and activates the siderophore system during iron-limiting conditions resulting in efficient iron uptake and inhibition of iron-consuming pathways. This is GATA-type transcription factor sreA from Arthroderma benhamiae (strain ATCC MYA-4681 / CBS 112371) (Trichophyton mentagrophytes).